A 198-amino-acid chain; its full sequence is Ribonuclease HII (198 aa).

The RNase H type-2 domain maps to 10-198 (QLVAGVDEVG…PVKRALGLAS (189 aa)). Asp16, Glu17, and Asp108 together coordinate a divalent metal cation.

The protein belongs to the RNase HII family. The cofactor is Mn(2+). Requires Mg(2+) as cofactor.

It localises to the cytoplasm. It carries out the reaction Endonucleolytic cleavage to 5'-phosphomonoester.. Endonuclease that specifically degrades the RNA of RNA-DNA hybrids. This chain is Ribonuclease HII, found in Shigella boydii serotype 4 (strain Sb227).